Consider the following 493-residue polypeptide: Matrilin-1 (493 aa).

A signal peptide spans 1-23 (MDGIFCALPLSLLLLLQSCGVWG). Residues 24–220 (APPQPRGTLC…THKFQEAFCV (197 aa)) enclose the VWFA 1 domain. Asn74 carries an N-linked (GlcNAc...) asparagine glycan. Residues 221 to 261 (VSDLCATGDHDCEQICISTPGSYKCACKEGFTLNNDGKTCS) enclose the EGF-like domain. 3 cysteine pairs are disulfide-bonded: Cys225–Cys236, Cys232–Cys245, and Cys247–Cys260. One can recognise a VWFA 2 domain in the interval 262–450 (ACSGGSGSAL…GKKLQMKICV (189 aa)). Residues 462-492 (KFQTKVEELINTLQQKLEAVAKRIEALENKI) are a coiled coil.

Homotrimer. In terms of tissue distribution, expressed in xyphoid cartilage and chondrocytes (at protein level).

It localises to the secreted. The protein localises to the extracellular space. Its subcellular location is the extracellular matrix. In terms of biological role, a major component of the extracellular matrix of non-articular cartilage. Binds to type 2 collagens and forms long concatenated protein networks as part of the extracellular matrix. Required for the network-like organization and bundling of collagen fibrils surrounding chondrocytes in the zones of maturation and hypertrophy. Required for mechanotransduction and adaption to mechanical loading in cartilage chondrocytes, resulting in an increase in expression of the extracellular matrix components ACAN and COL2A1. Acts as a moderator of angiogenesis in response to injury. This is Matrilin-1 from Gallus gallus (Chicken).